A 263-amino-acid polypeptide reads, in one-letter code: 3-methyl-2-oxobutanoate hydroxymethyltransferase (263 aa).

Mg(2+) contacts are provided by D45 and D84. 3-methyl-2-oxobutanoate-binding positions include 45–46 (DS), D84, and K112. E114 contacts Mg(2+). E181 serves as the catalytic Proton acceptor.

Belongs to the PanB family. Homodecamer; pentamer of dimers. The cofactor is Mg(2+).

It is found in the cytoplasm. The catalysed reaction is 3-methyl-2-oxobutanoate + (6R)-5,10-methylene-5,6,7,8-tetrahydrofolate + H2O = 2-dehydropantoate + (6S)-5,6,7,8-tetrahydrofolate. It functions in the pathway cofactor biosynthesis; (R)-pantothenate biosynthesis; (R)-pantoate from 3-methyl-2-oxobutanoate: step 1/2. In terms of biological role, catalyzes the reversible reaction in which hydroxymethyl group from 5,10-methylenetetrahydrofolate is transferred onto alpha-ketoisovalerate to form ketopantoate. This is 3-methyl-2-oxobutanoate hydroxymethyltransferase from Chromohalobacter salexigens (strain ATCC BAA-138 / DSM 3043 / CIP 106854 / NCIMB 13768 / 1H11).